The chain runs to 137 residues: Ribosomal RNA large subunit methyltransferase H (137 aa).

S-adenosyl-L-methionine is bound by residues Leu-56, Gly-85, and 104-109 (LSPLTF).

This sequence belongs to the RNA methyltransferase RlmH family. In terms of assembly, homodimer.

The protein localises to the cytoplasm. The catalysed reaction is pseudouridine(1915) in 23S rRNA + S-adenosyl-L-methionine = N(3)-methylpseudouridine(1915) in 23S rRNA + S-adenosyl-L-homocysteine + H(+). Its function is as follows. Specifically methylates the pseudouridine at position 1915 (m3Psi1915) in 23S rRNA. The polypeptide is Ribosomal RNA large subunit methyltransferase H (Prochlorococcus marinus subsp. pastoris (strain CCMP1986 / NIES-2087 / MED4)).